The primary structure comprises 376 residues: Respiration factor 1 (376 aa).

Disordered stretches follow at residues 1–23 (MKDL…DNRG), 88–107 (VNVT…NSTK), 258–279 (FKEK…TGSS), and 347–376 (GVNE…QHTN). Positions 354–376 (NSSNLNNSNSGTPHNHNQNQHTN) are enriched in low complexity.

It localises to the cytoplasm. The protein localises to the nucleus. The protein resides in the mitochondrion. Mitochondrial and nuclear transcriptional activator required for respiratory growth. In Saccharomyces cerevisiae (strain YJM789) (Baker's yeast), this protein is Respiration factor 1 (RSF1).